We begin with the raw amino-acid sequence, 20 residues long: Dermaseptin-N1 (20 aa).

Leucine amide is present on Leu-20.

As to expression, expressed by the skin glands.

The protein resides in the secreted. Antimicrobial peptide with moderate activity against both Gram-positive and Gram-negative bacteria, and important activity against Leishmania species (L.amazonensis and L.infantum). Acts on both Leishmania promastigote and amastigote forms. Shows activity against E.coli (MIC=17.8 uM), S.aureus (MIC=32.3 uM) and the phytopathogenic bacterium Xanthomonas axonopodis (MIC=2 uM). Shows low cytotoxicity against mammalian cells in models of peritoneal macrophages. In Pithecopus nordestinus (Northeastern Brazilian leaf frog), this protein is Dermaseptin-N1.